The following is a 124-amino-acid chain: SLIQFETLIMKVAKKSGMFWYSNYGCYCGWGGQGRPQDATDRCCFVHDCCYGKVTGCDPKMDVYSFSEENGDIVCGGDDPCKKEICECDRAAAICFRDNLTLYNDKKYWAFGAKNCPQEESEPC.

7 cysteine pairs are disulfide-bonded: Cys-26–Cys-116, Cys-28–Cys-44, Cys-43–Cys-95, Cys-49–Cys-124, Cys-50–Cys-88, Cys-57–Cys-81, and Cys-75–Cys-86. Ca(2+) contacts are provided by Tyr-27, Gly-29, and Gly-31. His-47 is an active-site residue. Asp-48 contacts Ca(2+). The active site involves Asp-89.

It belongs to the phospholipase A2 family. Group II subfamily. D49 sub-subfamily. As to quaternary structure, monomer. Requires Ca(2+) as cofactor. As to expression, expressed by the venom gland.

The protein resides in the secreted. The enzyme catalyses a 1,2-diacyl-sn-glycero-3-phosphocholine + H2O = a 1-acyl-sn-glycero-3-phosphocholine + a fatty acid + H(+). Its function is as follows. Snake venom phospholipase A2 (PLA2) that acts in vivo as an anti-thrombotic agent. Inhibits platelet aggregation induced by ADP, arachidonic acid, and thrombin. PLA2 catalyzes the calcium-dependent hydrolysis of the 2-acyl groups in 3-sn-phosphoglycerides. The chain is Acidic phospholipase A2 from Gloydius halys (Chinese water mocassin).